The primary structure comprises 248 residues: Ribonuclease PH (248 aa).

Phosphate is bound by residues arginine 86 and 124–126; that span reads GTR.

The protein belongs to the RNase PH family. As to quaternary structure, homohexameric ring arranged as a trimer of dimers.

The catalysed reaction is tRNA(n+1) + phosphate = tRNA(n) + a ribonucleoside 5'-diphosphate. In terms of biological role, phosphorolytic 3'-5' exoribonuclease that plays an important role in tRNA 3'-end maturation. Removes nucleotide residues following the 3'-CCA terminus of tRNAs; can also add nucleotides to the ends of RNA molecules by using nucleoside diphosphates as substrates, but this may not be physiologically important. Probably plays a role in initiation of 16S rRNA degradation (leading to ribosome degradation) during starvation. This chain is Ribonuclease PH, found in Clostridium kluyveri (strain NBRC 12016).